The chain runs to 137 residues: Proofreading thioesterase EntH (137 aa).

Glu63 (nucleophile or proton acceptor) is an active-site residue.

It belongs to the thioesterase PaaI family. As to quaternary structure, homotetramer. Dimer of dimers. Interacts specifically with the aryl carrier protein (ArCP) domain of EntB.

It localises to the cytoplasm. It functions in the pathway siderophore biosynthesis; enterobactin biosynthesis. Required for optimal enterobactin synthesis. Acts as a proofreading enzyme that prevents EntB misacylation by hydrolyzing the thioester bound existing between EntB and wrongly charged molecules. The polypeptide is Proofreading thioesterase EntH (Salmonella typhimurium (strain LT2 / SGSC1412 / ATCC 700720)).